Reading from the N-terminus, the 260-residue chain is Potassium inward rectifier (Kir)-like channel 3 (260 aa).

The segment at Met-1–Val-34 is disordered. Residues Met-1–Arg-68 lie on the Cytoplasmic side of the membrane. The span at Pro-18–Glu-31 shows a compositional bias: polar residues. The chain crosses the membrane as a helical span at residues Gln-69 to Leu-89. Positions Asp-127–Phe-146 form an intramembrane region, pore-forming. Residues Phe-153–Leu-173 traverse the membrane as a helical segment. Residues Ala-174 to Val-260 lie on the Cytoplasmic side of the membrane. 2 EF-hand domains span residues Leu-190 to Lys-225 and Glu-229 to Thr-256. Residues Asp-203, Asp-205, Asp-207, Arg-209, Glu-214, Asp-242, Ser-246, Arg-248, and Asp-253 each contribute to the Ca(2+) site.

It belongs to the two pore domain potassium channel (TC 1.A.1.7) family. Homotetramer. In terms of tissue distribution, expressed in hydathodes and the vascular tissues of roots, stems, leaves and flowers.

The protein resides in the vacuole membrane. Functionally, probable calcium-activated potassium channel. This chain is Potassium inward rectifier (Kir)-like channel 3 (KCO3), found in Arabidopsis thaliana (Mouse-ear cress).